A 452-amino-acid polypeptide reads, in one-letter code: MLMPFEIMETIKMIQEENLDIRTITMGISLRDCASSNSKETRDKIYNKITRLAANLVKVGEDIEKEFGIPIVNKRISVTPISLVAESSDEENYIKFAETLDKAADAVGVNFIGGFSALVQKGYTIGDRRLIASIPEALSSTKKVCSSVNVASTKAGINMDAVREMGHVIKKAAELSADSGGLACAKLVVFANVPEDNPFMAGAFHGVGEPECVINVGVSGPGVVKSALEKVRGADFETVSETIKKTAFKITRMGQLVAREASRRLGVAFGIVDLSLAPTPTIGDSVAHILEEMGLEKCGTHGTTAALALLNDAVKKGGTMASSSVGGLSGAFIPVSEDAGMIDAVKAGALSIEKLEAMTCVCSVGLDMIVVPGDTSEETISAIIADEAAIGVINNKTTAVRIIPAPGKKVGDIVEFGGLLGSGPVMKVSNFSSRDFINRGGRIPAPLNSLRN.

It belongs to the UPF0210 family. Homodimer.

This chain is UPF0210 protein Cthe_0410, found in Acetivibrio thermocellus (strain ATCC 27405 / DSM 1237 / JCM 9322 / NBRC 103400 / NCIMB 10682 / NRRL B-4536 / VPI 7372) (Clostridium thermocellum).